The sequence spans 262 residues: Hydroxyethylthiazole kinase (262 aa).

Met-44 is a substrate binding site. ATP contacts are provided by Arg-118 and Thr-166. Residue Gly-193 participates in substrate binding.

Belongs to the Thz kinase family. The cofactor is Mg(2+).

The catalysed reaction is 5-(2-hydroxyethyl)-4-methylthiazole + ATP = 4-methyl-5-(2-phosphooxyethyl)-thiazole + ADP + H(+). It functions in the pathway cofactor biosynthesis; thiamine diphosphate biosynthesis; 4-methyl-5-(2-phosphoethyl)-thiazole from 5-(2-hydroxyethyl)-4-methylthiazole: step 1/1. Functionally, catalyzes the phosphorylation of the hydroxyl group of 4-methyl-5-beta-hydroxyethylthiazole (THZ). This is Hydroxyethylthiazole kinase from Chlamydia caviae (strain ATCC VR-813 / DSM 19441 / 03DC25 / GPIC) (Chlamydophila caviae).